Here is a 292-residue protein sequence, read N- to C-terminus: Protein/nucleic acid deglycase HchA (292 aa).

The segment covering 1–12 has biased composition (polar residues); sequence MSQDVNELSKQP. Residues 1–23 are disordered; sequence MSQDVNELSKQPTPDKAEDNAFF. Cys190 functions as the Nucleophile in the catalytic mechanism.

Belongs to the peptidase C56 family. HchA subfamily.

The protein localises to the cytoplasm. It carries out the reaction N(omega)-(1-hydroxy-2-oxopropyl)-L-arginyl-[protein] + H2O = lactate + L-arginyl-[protein] + H(+). It catalyses the reaction N(6)-(1-hydroxy-2-oxopropyl)-L-lysyl-[protein] + H2O = lactate + L-lysyl-[protein] + H(+). The enzyme catalyses S-(1-hydroxy-2-oxopropyl)-L-cysteinyl-[protein] + H2O = lactate + L-cysteinyl-[protein] + H(+). The catalysed reaction is N(omega)-(1-hydroxy-2-oxoethyl)-L-arginyl-[protein] + H2O = L-arginyl-[protein] + glycolate + H(+). It carries out the reaction N(6)-(1-hydroxy-2-oxoethyl)-L-lysyl-[protein] + H2O = glycolate + L-lysyl-[protein] + H(+). It catalyses the reaction S-(1-hydroxy-2-oxoethyl)-L-cysteinyl-[protein] + H2O = glycolate + L-cysteinyl-[protein] + H(+). The enzyme catalyses N(2)-(1-hydroxy-2-oxopropyl)-dGTP + H2O = lactate + dGTP + H(+). The catalysed reaction is N(2)-(1-hydroxy-2-oxopropyl)-GTP + H2O = lactate + GTP + H(+). It carries out the reaction N(2)-(1-hydroxy-2-oxopropyl)-GDP + H2O = lactate + GDP + H(+). It catalyses the reaction N(2)-(1-hydroxy-2-oxopropyl)-GMP + H2O = lactate + GMP + H(+). The enzyme catalyses N(2)-(1-hydroxy-2-oxoethyl)-dGTP + H2O = dGTP + glycolate + H(+). The catalysed reaction is N(2)-(1-hydroxy-2-oxoethyl)-GTP + H2O = glycolate + GTP + H(+). It carries out the reaction N(2)-(1-hydroxy-2-oxoethyl)-GDP + H2O = glycolate + GDP + H(+). It catalyses the reaction N(2)-(1-hydroxy-2-oxoethyl)-GMP + H2O = glycolate + GMP + H(+). The enzyme catalyses an N(2)-(1-hydroxy-2-oxopropyl)-guanosine in RNA + H2O = a guanosine in RNA + lactate + H(+). The catalysed reaction is an N(2)-(1-hydroxy-2-oxopropyl)-2'-deoxyguanosine in DNA + H2O = a 2'-deoxyguanosine in DNA + lactate + H(+). It carries out the reaction an N(2)-(1-hydroxy-2-oxoethyl)-guanosine in RNA + H2O = a guanosine in RNA + glycolate + H(+). It catalyses the reaction an N(2)-(1-hydroxy-2-oxoethyl)-2'-deoxyguanosine in DNA + H2O = a 2'-deoxyguanosine in DNA + glycolate + H(+). In terms of biological role, protein and nucleotide deglycase that catalyzes the deglycation of the Maillard adducts formed between amino groups of proteins or nucleotides and reactive carbonyl groups of glyoxals. Thus, functions as a protein deglycase that repairs methylglyoxal- and glyoxal-glycated proteins, and releases repaired proteins and lactate or glycolate, respectively. Deglycates cysteine, arginine and lysine residues in proteins, and thus reactivates these proteins by reversing glycation by glyoxals. Acts on early glycation intermediates (hemithioacetals and aminocarbinols), preventing the formation of Schiff bases and advanced glycation endproducts (AGE). Also functions as a nucleotide deglycase able to repair glycated guanine in the free nucleotide pool (GTP, GDP, GMP, dGTP) and in DNA and RNA. Is thus involved in a major nucleotide repair system named guanine glycation repair (GG repair), dedicated to reversing methylglyoxal and glyoxal damage via nucleotide sanitization and direct nucleic acid repair. Plays an important role in protecting cells from carbonyl stress. In Staphylococcus aureus (strain Newman), this protein is Protein/nucleic acid deglycase HchA.